We begin with the raw amino-acid sequence, 77 residues long: Adipokinetic prohormone type 3 (77 aa).

An N-terminal signal peptide occupies residues 1-22 (MQVRAVLVLAVVALVAVATSRA). Pyrrolidone carboxylic acid is present on Gln23. The residue at position 30 (Trp30) is a Tryptophan amide.

Belongs to the AKH/HRTH/RPCH family.

The protein localises to the secreted. In terms of biological role, this hormone, released from cells in the corpora cardiaca, causes release of diglycerides from the fat body and stimulation of muscles to use these diglycerides as an energy source during energy-demanding processes. The chain is Adipokinetic prohormone type 3 from Locusta migratoria (Migratory locust).